Here is a 367-residue protein sequence, read N- to C-terminus: MSDSQTLVVKLGTSVLTGGSRRLNRAHIVELVRQCAQLHAAGHRIVIVTSGAIAAGREHLGYPELPATIASKQLLAAVGQSRLIQLWEQLFSIYGIHIGQMLLTRADMEDRERFLNARDTLRALLDNHIVPVINENDAVATAEIKVGDNDNLSALAAILAGADKLLLLTDQQGLFTADPRSNPQAELIKDVYGVDDALRSVAGDSVSGLGTGGMSTKLQAADVACRAGIDTIIASGSKPGVIGDVMEGISVGTRFHAQASPLENRKRWIFGAPPAGEITVDEGATAAMLERGSSLLPKGIKSVTGNFSRGEVIRICNLQGRDIAHGVSRYNSDALRRIAGHHSQQIDAILGYEYGPVAVHRDDMITR.

Lys-10 provides a ligand contact to ATP. Substrate contacts are provided by Ser-50, Asp-137, and Asn-149. ATP is bound by residues 169–170 (TD) and 211–217 (TGGMSTK). One can recognise a PUA domain in the interval 275 to 353 (AGEITVDEGA…QQIDAILGYE (79 aa)).

The protein belongs to the glutamate 5-kinase family.

It localises to the cytoplasm. It catalyses the reaction L-glutamate + ATP = L-glutamyl 5-phosphate + ADP. The protein operates within amino-acid biosynthesis; L-proline biosynthesis; L-glutamate 5-semialdehyde from L-glutamate: step 1/2. Functionally, catalyzes the transfer of a phosphate group to glutamate to form L-glutamate 5-phosphate. The chain is Glutamate 5-kinase from Salmonella paratyphi A (strain ATCC 9150 / SARB42).